A 145-amino-acid chain; its full sequence is Putative transcriptional regulatory protein PYRAB13000 (145 aa).

The protein belongs to the Tfx family.

Its function is as follows. Putative transcriptional regulator. The polypeptide is Putative transcriptional regulatory protein PYRAB13000 (Pyrococcus abyssi (strain GE5 / Orsay)).